Consider the following 133-residue polypeptide: Fatty acid-binding protein (133 aa).

The protein belongs to the calycin superfamily. Fatty-acid binding protein (FABP) family.

The chain is Fatty acid-binding protein from Clonorchis sinensis (Chinese liver fluke).